Consider the following 121-residue polypeptide: Ribosome-binding factor A (121 aa).

Belongs to the RbfA family. In terms of assembly, monomer. Binds 30S ribosomal subunits, but not 50S ribosomal subunits or 70S ribosomes.

It is found in the cytoplasm. In terms of biological role, one of several proteins that assist in the late maturation steps of the functional core of the 30S ribosomal subunit. Associates with free 30S ribosomal subunits (but not with 30S subunits that are part of 70S ribosomes or polysomes). Required for efficient processing of 16S rRNA. May interact with the 5'-terminal helix region of 16S rRNA. This Clostridium acetobutylicum (strain ATCC 824 / DSM 792 / JCM 1419 / IAM 19013 / LMG 5710 / NBRC 13948 / NRRL B-527 / VKM B-1787 / 2291 / W) protein is Ribosome-binding factor A.